The chain runs to 6907 residues: Fibrous sheath-interacting protein 2 (6907 aa).

A disordered region spans residues 273–292; sequence EERIEEQQHRNREESDRKKQ. S430 carries the phosphoserine modification. Disordered regions lie at residues 439 to 472, 954 to 990, 1545 to 1573, 3202 to 3257, 5650 to 5672, 5725 to 5781, 5850 to 5880, and 6852 to 6874; these read SQAF…ESGP, FQKS…RPFP, VQED…TKEM, VSSD…FDQT, RTSS…EHHS, SAQS…KPGI, DKGN…EAPS, and GSAN…KQGS. The segment covering 445–460 has biased composition (basic and acidic residues); the sequence is PSKEEKETNADWDGRP. A compositionally biased stretch (polar residues) spans 954 to 966; that stretch reads FQKSRQPRISSPS. 2 stretches are compositionally biased toward basic and acidic residues: residues 1545 to 1555 and 3213 to 3229; these read VQEDNKEETKS and SVED…RPDS. Low complexity predominate over residues 5728–5741; that stretch reads SVTTKKVSSSTNKN. A coiled-coil region spans residues 5738–5766; sequence TNKNISAKEKEEEEREKEKVREEIKSEPS. The span at 5743 to 5778 shows a compositional bias: basic and acidic residues; it reads SAKEKEEEEREKEKVREEIKSEPSKPDDPQNQRESK.

As to quaternary structure, may interact with AKAP4. As to expression, predominantly expressed in testis.

In terms of biological role, plays a role in spermatogenesis. The polypeptide is Fibrous sheath-interacting protein 2 (FSIP2) (Homo sapiens (Human)).